The sequence spans 235 residues: 5'-methylthioadenosine/S-adenosylhomocysteine nucleosidase (235 aa).

Glutamate 12 (proton acceptor) is an active-site residue. Substrate-binding positions include glycine 78, methionine 153, and 174–175 (ME). Aspartate 198 serves as the catalytic Proton donor.

Belongs to the PNP/UDP phosphorylase family. MtnN subfamily.

The enzyme catalyses S-adenosyl-L-homocysteine + H2O = S-(5-deoxy-D-ribos-5-yl)-L-homocysteine + adenine. It carries out the reaction S-methyl-5'-thioadenosine + H2O = 5-(methylsulfanyl)-D-ribose + adenine. The catalysed reaction is 5'-deoxyadenosine + H2O = 5-deoxy-D-ribose + adenine. It functions in the pathway amino-acid biosynthesis; L-methionine biosynthesis via salvage pathway; S-methyl-5-thio-alpha-D-ribose 1-phosphate from S-methyl-5'-thioadenosine (hydrolase route): step 1/2. Its function is as follows. Catalyzes the irreversible cleavage of the glycosidic bond in both 5'-methylthioadenosine (MTA) and S-adenosylhomocysteine (SAH/AdoHcy) to adenine and the corresponding thioribose, 5'-methylthioribose and S-ribosylhomocysteine, respectively. Also cleaves 5'-deoxyadenosine, a toxic by-product of radical S-adenosylmethionine (SAM) enzymes, into 5-deoxyribose and adenine. In Geobacillus kaustophilus (strain HTA426), this protein is 5'-methylthioadenosine/S-adenosylhomocysteine nucleosidase.